The sequence spans 222 residues: Methylthioribulose-1-phosphate dehydratase (222 aa).

Residues His-94 and His-96 each contribute to the Zn(2+) site.

It belongs to the aldolase class II family. MtnB subfamily. Requires Zn(2+) as cofactor.

The catalysed reaction is 5-(methylsulfanyl)-D-ribulose 1-phosphate = 5-methylsulfanyl-2,3-dioxopentyl phosphate + H2O. It participates in amino-acid biosynthesis; L-methionine biosynthesis via salvage pathway; L-methionine from S-methyl-5-thio-alpha-D-ribose 1-phosphate: step 2/6. Its function is as follows. Catalyzes the dehydration of methylthioribulose-1-phosphate (MTRu-1-P) into 2,3-diketo-5-methylthiopentyl-1-phosphate (DK-MTP-1-P). This Yersinia pseudotuberculosis serotype IB (strain PB1/+) protein is Methylthioribulose-1-phosphate dehydratase.